The sequence spans 302 residues: Homoserine kinase (302 aa).

90 to 100 is a binding site for ATP; sequence KPGSGLGSSSA.

It belongs to the GHMP kinase family. Homoserine kinase subfamily.

The protein resides in the cytoplasm. The enzyme catalyses L-homoserine + ATP = O-phospho-L-homoserine + ADP + H(+). Its pathway is amino-acid biosynthesis; L-threonine biosynthesis; L-threonine from L-aspartate: step 4/5. Functionally, catalyzes the ATP-dependent phosphorylation of L-homoserine to L-homoserine phosphate. The polypeptide is Homoserine kinase (Methanococcus vannielii (strain ATCC 35089 / DSM 1224 / JCM 13029 / OCM 148 / SB)).